A 390-amino-acid chain; its full sequence is Chorismate synthase (390 aa).

Residues arginine 39 and arginine 45 each contribute to the NADP(+) site. Residues 132-134 (RSS), 253-254 (NA), glycine 298, 313-317 (KPIPT), and arginine 339 contribute to the FMN site.

The protein belongs to the chorismate synthase family. Homotetramer. It depends on FMNH2 as a cofactor.

It carries out the reaction 5-O-(1-carboxyvinyl)-3-phosphoshikimate = chorismate + phosphate. The protein operates within metabolic intermediate biosynthesis; chorismate biosynthesis; chorismate from D-erythrose 4-phosphate and phosphoenolpyruvate: step 7/7. Catalyzes the anti-1,4-elimination of the C-3 phosphate and the C-6 proR hydrogen from 5-enolpyruvylshikimate-3-phosphate (EPSP) to yield chorismate, which is the branch point compound that serves as the starting substrate for the three terminal pathways of aromatic amino acid biosynthesis. This reaction introduces a second double bond into the aromatic ring system. The protein is Chorismate synthase of Bacillus licheniformis (strain ATCC 14580 / DSM 13 / JCM 2505 / CCUG 7422 / NBRC 12200 / NCIMB 9375 / NCTC 10341 / NRRL NRS-1264 / Gibson 46).